A 234-amino-acid polypeptide reads, in one-letter code: Probable chemoreceptor glutamine deamidase CheD (234 aa).

It belongs to the CheD family.

The enzyme catalyses L-glutaminyl-[protein] + H2O = L-glutamyl-[protein] + NH4(+). In terms of biological role, probably deamidates glutamine residues to glutamate on methyl-accepting chemotaxis receptors (MCPs), playing an important role in chemotaxis. In Burkholderia pseudomallei (strain 1710b), this protein is Probable chemoreceptor glutamine deamidase CheD.